Consider the following 102-residue polypeptide: MEIGISHYLTVSAILFTLGVFGIFLNRKNVIIILMSVELILLAVNINMVAFSAFLNDITGQVFALFILTVAAAEAAIGLAILVVFYRNRGSIAVEDVNMMKG.

A run of 3 helical transmembrane segments spans residues 5-25 (ISHYLTVSAILFTLGVFGIFL), 31-51 (IIILMSVELILLAVNINMVAF), and 65-85 (LFILTVAAAEAAIGLAILVVF).

Belongs to the complex I subunit 4L family. NDH-1 is composed of 14 different subunits. Subunits NuoA, H, J, K, L, M, N constitute the membrane sector of the complex.

Its subcellular location is the cell inner membrane. The catalysed reaction is a quinone + NADH + 5 H(+)(in) = a quinol + NAD(+) + 4 H(+)(out). In terms of biological role, NDH-1 shuttles electrons from NADH, via FMN and iron-sulfur (Fe-S) centers, to quinones in the respiratory chain. The immediate electron acceptor for the enzyme in this species is believed to be ubiquinone. Couples the redox reaction to proton translocation (for every two electrons transferred, four hydrogen ions are translocated across the cytoplasmic membrane), and thus conserves the redox energy in a proton gradient. This is NADH-quinone oxidoreductase subunit K 1 from Rhizobium meliloti (strain 1021) (Ensifer meliloti).